We begin with the raw amino-acid sequence, 66 residues long: Large ribosomal subunit protein bL31 (66 aa).

C16, C18, C36, and C39 together coordinate Zn(2+).

It belongs to the bacterial ribosomal protein bL31 family. Type A subfamily. As to quaternary structure, part of the 50S ribosomal subunit. Requires Zn(2+) as cofactor.

Its function is as follows. Binds the 23S rRNA. This is Large ribosomal subunit protein bL31 from Sulfurovum sp. (strain NBC37-1).